A 128-amino-acid polypeptide reads, in one-letter code: Leucine-rich single-pass membrane protein 1 (128 aa).

Serine 24 bears the Phosphoserine mark. A helical membrane pass occupies residues 65–85 (VGLIIVLIISLALVSFVIFLI). A coiled-coil region spans residues 87–111 (QTENKMEDVSRRLAAEGKDIDDLKK).

It is found in the membrane. The chain is Leucine-rich single-pass membrane protein 1 (LSMEM1) from Bos taurus (Bovine).